The following is a 447-amino-acid chain: MKRVVIAGTSSMVGKTTISTGIMNALSKKNNVQPYKVGPDYIDPTYHTKATENTSRNLDSFFMDETQIRSLFKRHSQNKDISIIEGVRGLFEGISPYNDVGSTASVAKTIDSPIILLMDARSLTRSAAAIIKGFKSFDSELNIKGVIFNKIRGDGHLNKLKEAVKYYDGEIEIVGAIKRDENLAVAERHLGLVPTPEKTEELGKQIEFWGDTVLECLDIDKIIEISDVDFEIPVDNKNKDETLWKVDKNSSKIAIAFDESFNFYYHDNFDALKENGAKLEFFSPIHDFEIPNCDILYLGGGYPEIFSKELSKNTSMIESIRNFDGKIYGECGGLMYLTNSINGVDMLKLINADSIMTKNVQGLSYVIGSFKKDCIIGKEKETFKAHEFHYSKLININENDFSYEINRGTGIIDKLDGISIKDGRIVGGYAHQHAVGNPYFASCLSKL.

The 188-residue stretch at 252 to 439 folds into the GATase cobBQ-type domain; sequence KIAIAFDESF…AHQHAVGNPY (188 aa). Residue Cys331 is the Nucleophile of the active site.

The protein belongs to the CobB/CbiA family. Mg(2+) serves as cofactor.

The enzyme catalyses cob(II)yrinate + 2 L-glutamine + 2 ATP + 2 H2O = cob(II)yrinate a,c diamide + 2 L-glutamate + 2 ADP + 2 phosphate + 2 H(+). The catalysed reaction is Ni-sirohydrochlorin + 2 L-glutamine + 2 ATP + 2 H2O = Ni-sirohydrochlorin a,c-diamide + 2 L-glutamate + 2 ADP + 2 phosphate + 2 H(+). Its pathway is cofactor biosynthesis; adenosylcobalamin biosynthesis; cob(II)yrinate a,c-diamide from sirohydrochlorin (anaerobic route): step 10/10. Catalyzes the ATP-dependent amidation of the two carboxylate groups at positions a and c of cobyrinate, using either L-glutamine or ammonia as the nitrogen source. Involved in the biosynthesis of the unique nickel-containing tetrapyrrole coenzyme F430, the prosthetic group of methyl-coenzyme M reductase (MCR), which plays a key role in methanogenesis and anaerobic methane oxidation. Catalyzes the ATP-dependent amidation of the two carboxylate groups at positions a and c of Ni-sirohydrochlorin, using L-glutamine or ammonia as the nitrogen source. The sequence is that of Cobyrinate a,c-diamide synthase from Methanococcus vannielii (strain ATCC 35089 / DSM 1224 / JCM 13029 / OCM 148 / SB).